A 236-amino-acid chain; its full sequence is Ion-translocating oxidoreductase complex subunit E (236 aa).

The next 6 helical transmembrane spans lie at 18–38 (ALVQ…ATNA), 39–59 (LGLG…VSAL), 69–89 (IPIY…LINA), 92–112 (FGLY…CIVI), 128–148 (ALDG…LGAL), and 182–202 (PFLL…MLAF). Residues 217–236 (RSAVGQALRGAAPTDNHEQA) are disordered.

Belongs to the NqrDE/RnfAE family. As to quaternary structure, the complex is composed of six subunits: RnfA, RnfB, RnfC, RnfD, RnfE and RnfG.

It is found in the cell inner membrane. In terms of biological role, part of a membrane-bound complex that couples electron transfer with translocation of ions across the membrane. In Edwardsiella ictaluri (strain 93-146), this protein is Ion-translocating oxidoreductase complex subunit E.